Consider the following 377-residue polypeptide: Guanine nucleotide-binding protein subunit beta (377 aa).

WD repeat units follow at residues 63 to 93 (GHTG…IVWN), 105 to 135 (LPCA…SIFS), 154 to 185 (GHRG…ILWD), 202 to 233 (GHTA…RLWD), 246 to 276 (GHEG…RLYD), 292 to 323 (GENG…YVWD), and 339 to 369 (SHRN…KIWA). Short sequence motifs (DWD box) lie at residues 220–235 (FISG…WDTR) and 263–278 (FGTG…YDIR).

It belongs to the WD repeat G protein beta family. G proteins are composed of 3 units, alpha, beta and gamma. Interacts with the gamma subunits GG1 and GG2. The dimers GB1-GG1 and GB1-GG2 interact with NDL1, NDL2 and NDL3. Interacts with WNK8. Interacts with XLG2. Interacts with RACK1A, RACK1B and RACK1C. Interacts with ZAR1 (via GBeta-binding domain). Expressed in seedlings (especially at the hypocotyl/root junction), roots, leaves (restricted to veins and guard cells), and flowers. Also present in hydathods. Expressed in guard cells, mesophyll tissue of cotyledons, trichomes and whole siliques, but not in seeds.

It localises to the cell membrane. It is found in the cytoplasm. The protein resides in the nucleus. Guanine nucleotide-binding proteins (G proteins) are involved as a modulator or transducer in various transmembrane signaling systems. The beta and gamma chains are required for the GTPase activity, for replacement of GDP by GTP, and for G protein-effector interaction. The heterotrimeric G-protein controls defense responses to necrotrophic and vascular fungi probably by modulating cell wall-related genes expression (e.g. lower xylose content in cell walls); involved in resistance to fungal pathogens such as Alternaria brassicicola and Fusarium oxysporum. Modulates root architecture (e.g. lateral root formation). Acts with XGL3 in the positive regulation of root waving and root skewing. Involved in the asymmetric division of zygote and specification of apical and basal cell lineages. This Arabidopsis thaliana (Mouse-ear cress) protein is Guanine nucleotide-binding protein subunit beta (GB1).